The chain runs to 428 residues: Adenylosuccinate synthetase (428 aa).

GTP contacts are provided by residues 12–18 and 40–42; these read GDEGKGK and GHT. D13 acts as the Proton acceptor in catalysis. The Mg(2+) site is built by D13 and G40. Residues 13 to 16, 38 to 41, T128, R142, Q223, T238, and R302 each bind IMP; these read DEGK and NAGH. Residue H41 is the Proton donor of the active site. 298 to 304 provides a ligand contact to substrate; the sequence is TTTGRPR. GTP contacts are provided by residues R304, 330-332, and 412-414; these read KLD and SVG.

Belongs to the adenylosuccinate synthetase family. In terms of assembly, homodimer. It depends on Mg(2+) as a cofactor.

Its subcellular location is the cytoplasm. The catalysed reaction is IMP + L-aspartate + GTP = N(6)-(1,2-dicarboxyethyl)-AMP + GDP + phosphate + 2 H(+). The protein operates within purine metabolism; AMP biosynthesis via de novo pathway; AMP from IMP: step 1/2. Plays an important role in the de novo pathway of purine nucleotide biosynthesis. Catalyzes the first committed step in the biosynthesis of AMP from IMP. The polypeptide is Adenylosuccinate synthetase (Brevibacillus brevis (strain 47 / JCM 6285 / NBRC 100599)).